Reading from the N-terminus, the 137-residue chain is MSENQDTQKSFLETVKFDDRGLVPAIVQDHETGKVLMMAWMNLESLKMTLEKKKACYWSRSRNKLWLKGESSGNMQDVHDIMIDCDGDTLLLKVSQKGGACHVGYHSCFYRKTTDGEQMEICDTLMFDPEEVYGKKS.

A Mg(2+)-binding site is contributed by Asp-84. A Zn(2+)-binding site is contributed by Cys-85. Residues Asp-86 and Asp-88 each coordinate Mg(2+). The Zn(2+) site is built by Cys-101 and Cys-108.

It belongs to the PRA-CH family. Homodimer. Requires Mg(2+) as cofactor. Zn(2+) is required as a cofactor.

The protein resides in the cytoplasm. It carries out the reaction 1-(5-phospho-beta-D-ribosyl)-5'-AMP + H2O = 1-(5-phospho-beta-D-ribosyl)-5-[(5-phospho-beta-D-ribosylamino)methylideneamino]imidazole-4-carboxamide. Its pathway is amino-acid biosynthesis; L-histidine biosynthesis; L-histidine from 5-phospho-alpha-D-ribose 1-diphosphate: step 3/9. Catalyzes the hydrolysis of the adenine ring of phosphoribosyl-AMP. The protein is Phosphoribosyl-AMP cyclohydrolase of Chlorobaculum parvum (strain DSM 263 / NCIMB 8327) (Chlorobium vibrioforme subsp. thiosulfatophilum).